A 248-amino-acid polypeptide reads, in one-letter code: Coenzyme F420:L-glutamate ligase (248 aa).

GTP is bound by residues 15–18 (IPLI), 45–46 (ET), and lysine 50. Aspartate 115 contacts a divalent metal cation. GTP is bound at residue asparagine 118. 3 residues coordinate a divalent metal cation: aspartate 155, serine 156, and glutamine 213. Position 211-218 (211-218 (MGQSNEGI)) interacts with GTP.

This sequence belongs to the CofE family. Homodimer. Mg(2+) is required as a cofactor. Mn(2+) serves as cofactor. It depends on K(+) as a cofactor.

It carries out the reaction oxidized coenzyme F420-0 + GTP + L-glutamate = oxidized coenzyme F420-1 + GDP + phosphate + H(+). It catalyses the reaction oxidized coenzyme F420-1 + GTP + L-glutamate = oxidized coenzyme F420-2 + GDP + phosphate + H(+). It participates in cofactor biosynthesis; coenzyme F420 biosynthesis. Catalyzes the GTP-dependent successive addition of two or more gamma-linked L-glutamates to the L-lactyl phosphodiester of 7,8-didemethyl-8-hydroxy-5-deazariboflavin (F420-0) to form coenzyme F420-0-glutamyl-glutamate (F420-2) or polyglutamated F420 derivatives. The sequence is that of Coenzyme F420:L-glutamate ligase from Methanococcus maripaludis (strain C7 / ATCC BAA-1331).